A 248-amino-acid polypeptide reads, in one-letter code: tRNA pseudouridine synthase A 2 (248 aa).

Residue Asp-55 is the Nucleophile of the active site. Position 113 (Tyr-113) interacts with substrate.

This sequence belongs to the tRNA pseudouridine synthase TruA family. As to quaternary structure, homodimer.

It carries out the reaction uridine(38/39/40) in tRNA = pseudouridine(38/39/40) in tRNA. Functionally, formation of pseudouridine at positions 38, 39 and 40 in the anticodon stem and loop of transfer RNAs. In Clostridium tetani (strain Massachusetts / E88), this protein is tRNA pseudouridine synthase A 2.